The following is a 442-amino-acid chain: 3-phosphoshikimate 1-carboxyvinyltransferase (442 aa).

Positions 25, 26, and 30 each coordinate 3-phosphoshikimate. Lys25 contacts phosphoenolpyruvate. Phosphoenolpyruvate contacts are provided by Gly97 and Arg125. Ser170, Gln172, Asp323, and Lys350 together coordinate 3-phosphoshikimate. Phosphoenolpyruvate is bound at residue Gln172. The active-site Proton acceptor is the Asp323. 2 residues coordinate phosphoenolpyruvate: Arg354 and Arg399.

The protein belongs to the EPSP synthase family. As to quaternary structure, monomer.

It localises to the cytoplasm. The enzyme catalyses 3-phosphoshikimate + phosphoenolpyruvate = 5-O-(1-carboxyvinyl)-3-phosphoshikimate + phosphate. It participates in metabolic intermediate biosynthesis; chorismate biosynthesis; chorismate from D-erythrose 4-phosphate and phosphoenolpyruvate: step 6/7. Its function is as follows. Catalyzes the transfer of the enolpyruvyl moiety of phosphoenolpyruvate (PEP) to the 5-hydroxyl of shikimate-3-phosphate (S3P) to produce enolpyruvyl shikimate-3-phosphate and inorganic phosphate. The polypeptide is 3-phosphoshikimate 1-carboxyvinyltransferase (Bartonella henselae (strain ATCC 49882 / DSM 28221 / CCUG 30454 / Houston 1) (Rochalimaea henselae)).